The primary structure comprises 333 residues: uncharacterized protein (333 aa).

It belongs to the proline racemase family.

This is an uncharacterized protein from Vibrio parahaemolyticus serotype O3:K6 (strain RIMD 2210633).